A 277-amino-acid chain; its full sequence is Thymidylate synthase (277 aa).

Arginine 27 provides a ligand contact to dUMP. Histidine 57 serves as a coordination point for (6R)-5,10-methylene-5,6,7,8-tetrahydrofolate. 132–133 (RR) provides a ligand contact to dUMP. The Nucleophile role is filled by cysteine 152. DUMP-binding positions include 179 to 182 (RSAD), asparagine 190, and 220 to 222 (HIY). (6R)-5,10-methylene-5,6,7,8-tetrahydrofolate is bound at residue aspartate 182. Position 276 (alanine 276) interacts with (6R)-5,10-methylene-5,6,7,8-tetrahydrofolate.

The protein belongs to the thymidylate synthase family. Bacterial-type ThyA subfamily. In terms of assembly, homodimer.

It localises to the cytoplasm. It carries out the reaction dUMP + (6R)-5,10-methylene-5,6,7,8-tetrahydrofolate = 7,8-dihydrofolate + dTMP. It functions in the pathway pyrimidine metabolism; dTTP biosynthesis. Catalyzes the reductive methylation of 2'-deoxyuridine-5'-monophosphate (dUMP) to 2'-deoxythymidine-5'-monophosphate (dTMP) while utilizing 5,10-methylenetetrahydrofolate (mTHF) as the methyl donor and reductant in the reaction, yielding dihydrofolate (DHF) as a by-product. This enzymatic reaction provides an intracellular de novo source of dTMP, an essential precursor for DNA biosynthesis. The sequence is that of Thymidylate synthase from Acidovorax sp. (strain JS42).